Consider the following 505-residue polypeptide: Protein phosphatase 1J (505 aa).

Residues 1–103 (MLNRVRSAVA…PPDTGRRLPW (103 aa)) are disordered. The span at 27-50 (DLPNAASAPPAAAPEAPRSPPAKA) shows a compositional bias: low complexity. Residues S66 and S76 each carry the phosphoserine modification. Residues 104–498 (STGYAEVINA…DDISVFVIPL (395 aa)) enclose the PPM-type phosphatase domain.

It belongs to the PP2C family. As to quaternary structure, interacts with UBE2I/UBC9.

It catalyses the reaction O-phospho-L-seryl-[protein] + H2O = L-seryl-[protein] + phosphate. The catalysed reaction is O-phospho-L-threonyl-[protein] + H2O = L-threonyl-[protein] + phosphate. The sequence is that of Protein phosphatase 1J (PPM1J) from Homo sapiens (Human).